Reading from the N-terminus, the 450-residue chain is Phosphoglucosamine mutase (450 aa).

The active-site Phosphoserine intermediate is the serine 101. Mg(2+)-binding residues include serine 101, aspartate 240, aspartate 242, and aspartate 244. Position 101 is a phosphoserine (serine 101).

The protein belongs to the phosphohexose mutase family. Mg(2+) serves as cofactor. In terms of processing, activated by phosphorylation.

The catalysed reaction is alpha-D-glucosamine 1-phosphate = D-glucosamine 6-phosphate. In terms of biological role, catalyzes the conversion of glucosamine-6-phosphate to glucosamine-1-phosphate. The polypeptide is Phosphoglucosamine mutase (Streptococcus sanguinis (strain SK36)).